A 162-amino-acid polypeptide reads, in one-letter code: Large ribosomal subunit protein uL10 (162 aa).

The protein belongs to the universal ribosomal protein uL10 family. Part of the ribosomal stalk of the 50S ribosomal subunit. The N-terminus interacts with L11 and the large rRNA to form the base of the stalk. The C-terminus forms an elongated spine to which L12 dimers bind in a sequential fashion forming a multimeric L10(L12)X complex.

Its function is as follows. Forms part of the ribosomal stalk, playing a central role in the interaction of the ribosome with GTP-bound translation factors. This chain is Large ribosomal subunit protein uL10, found in Borrelia recurrentis (strain A1).